Consider the following 526-residue polypeptide: Na(+)/H(+) antiporter NhaB (526 aa).

10 helical membrane-spanning segments follow: residues 13 to 33, 98 to 118, 133 to 155, 208 to 228, 244 to 264, 309 to 329, 355 to 375, 395 to 415, 452 to 472, and 481 to 501; these read FLGQSPDWYKLAILVFLVVNP, LLLIFMVAGIYFMKQLLLFVF, LAFCFAAALLSAFLDALTVVAVV, LLMHAGVGTALGGVMTMVGEP, FFLRMAPVTLPVFACGLLVCL, ALIGIWLVVALAFHLAEVGLI, EALPFTALLTVFFTVVAVIIE, LALFYLFNGLLSSVSDNVFVG, VATPNGQAAFLFLLTSALAPL, and VWMALPYTVVLTLVGLLCVQF.

It belongs to the NhaB Na(+)/H(+) (TC 2.A.34) antiporter family.

It is found in the cell inner membrane. The enzyme catalyses 2 Na(+)(in) + 3 H(+)(out) = 2 Na(+)(out) + 3 H(+)(in). In terms of biological role, na(+)/H(+) antiporter that extrudes sodium in exchange for external protons. The protein is Na(+)/H(+) antiporter NhaB of Serratia proteamaculans (strain 568).